The following is a 315-amino-acid chain: tRNA dimethylallyltransferase (315 aa).

G14–T21 is a binding site for ATP. T16–T21 contacts substrate. 3 interaction with substrate tRNA regions span residues D39–L42, Q163–R167, and R248–R253.

The protein belongs to the IPP transferase family. As to quaternary structure, monomer. Requires Mg(2+) as cofactor.

It catalyses the reaction adenosine(37) in tRNA + dimethylallyl diphosphate = N(6)-dimethylallyladenosine(37) in tRNA + diphosphate. Functionally, catalyzes the transfer of a dimethylallyl group onto the adenine at position 37 in tRNAs that read codons beginning with uridine, leading to the formation of N6-(dimethylallyl)adenosine (i(6)A). In Paraburkholderia xenovorans (strain LB400), this protein is tRNA dimethylallyltransferase.